A 260-amino-acid chain; its full sequence is Ribosomal RNA small subunit methyltransferase J (260 aa).

Residues 101–102 (RD), 117–118 (ER), 153–154 (SS), and Asp176 each bind S-adenosyl-L-methionine.

Belongs to the methyltransferase superfamily. RsmJ family.

It is found in the cytoplasm. It catalyses the reaction guanosine(1516) in 16S rRNA + S-adenosyl-L-methionine = N(2)-methylguanosine(1516) in 16S rRNA + S-adenosyl-L-homocysteine + H(+). Its function is as follows. Specifically methylates the guanosine in position 1516 of 16S rRNA. This Aliivibrio salmonicida (strain LFI1238) (Vibrio salmonicida (strain LFI1238)) protein is Ribosomal RNA small subunit methyltransferase J.